The following is a 117-amino-acid chain: Immunoglobulin heavy variable 1-84 (117 aa).

The signal sequence occupies residues 1 to 19; that stretch reads MGWSWIFLFLLSGTAGVHC. The framework-1 stretch occupies residues 20-49; it reads QIQLQQSGPELVKPGASVKISCKASGYTFT. In terms of domain architecture, Ig-like spans 31–117; the sequence is VKPGASVKIS…EDSAVYFCAR (87 aa). Cys-41 and Cys-115 are oxidised to a cystine. A complementarity-determining-1 region spans residues 50 to 54; it reads DYYIN. Residues 55–68 form a framework-2 region; the sequence is WVKQRPGQGLEWIG. The tract at residues 69-85 is complementarity-determining-2; sequence WIYPGSGNTKYNEKFKG. The framework-3 stretch occupies residues 86–117; the sequence is KATLTVDTSSSTAYMQLSSLTSEDSAVYFCAR.

The polypeptide is Immunoglobulin heavy variable 1-84 (Mus musculus (Mouse)).